A 163-amino-acid polypeptide reads, in one-letter code: Cyclic pyranopterin monophosphate synthase (163 aa).

Substrate-binding positions include 76–78 (LCH) and 114–115 (ME). Residue Asp-129 is part of the active site.

It belongs to the MoaC family. In terms of assembly, homohexamer; trimer of dimers.

The catalysed reaction is (8S)-3',8-cyclo-7,8-dihydroguanosine 5'-triphosphate = cyclic pyranopterin phosphate + diphosphate. It participates in cofactor biosynthesis; molybdopterin biosynthesis. In terms of biological role, catalyzes the conversion of (8S)-3',8-cyclo-7,8-dihydroguanosine 5'-triphosphate to cyclic pyranopterin monophosphate (cPMP). The sequence is that of Cyclic pyranopterin monophosphate synthase from Desulfovibrio desulfuricans (strain ATCC 27774 / DSM 6949 / MB).